The primary structure comprises 110 residues: DNA-directed RNA polymerase subunit omega (110 aa).

Belongs to the RNA polymerase subunit omega family. In terms of assembly, the RNAP catalytic core consists of 2 alpha, 1 beta, 1 beta' and 1 omega subunit. When a sigma factor is associated with the core the holoenzyme is formed, which can initiate transcription.

It carries out the reaction RNA(n) + a ribonucleoside 5'-triphosphate = RNA(n+1) + diphosphate. Promotes RNA polymerase assembly. Latches the N- and C-terminal regions of the beta' subunit thereby facilitating its interaction with the beta and alpha subunits. The polypeptide is DNA-directed RNA polymerase subunit omega (Nocardioides sp. (strain ATCC BAA-499 / JS614)).